The sequence spans 213 residues: ATP-dependent Clp protease proteolytic subunit (213 aa).

The Nucleophile role is filled by Ser-114. Residue His-139 is part of the active site.

This sequence belongs to the peptidase S14 family. As to quaternary structure, fourteen ClpP subunits assemble into 2 heptameric rings which stack back to back to give a disk-like structure with a central cavity, resembling the structure of eukaryotic proteasomes.

Its subcellular location is the cytoplasm. The catalysed reaction is Hydrolysis of proteins to small peptides in the presence of ATP and magnesium. alpha-casein is the usual test substrate. In the absence of ATP, only oligopeptides shorter than five residues are hydrolyzed (such as succinyl-Leu-Tyr-|-NHMec, and Leu-Tyr-Leu-|-Tyr-Trp, in which cleavage of the -Tyr-|-Leu- and -Tyr-|-Trp bonds also occurs).. Functionally, cleaves peptides in various proteins in a process that requires ATP hydrolysis. Has a chymotrypsin-like activity. Plays a major role in the degradation of misfolded proteins. This chain is ATP-dependent Clp protease proteolytic subunit, found in Ectopseudomonas mendocina (strain ymp) (Pseudomonas mendocina).